The chain runs to 434 residues: Maltoporin (434 aa).

A signal peptide spans Met-1–Ala-25.

It belongs to the porin LamB (TC 1.B.3) family. Homotrimer formed of three 18-stranded antiparallel beta-barrels, containing three independent channels.

It is found in the cell outer membrane. It catalyses the reaction beta-maltose(in) = beta-maltose(out). In terms of biological role, involved in the transport of maltose and maltodextrins. This is Maltoporin from Aeromonas hydrophila.